Here is a 340-residue protein sequence, read N- to C-terminus: MPHGRVVNTPVTIAIDAMSGDRGAAVVVHAALEAVRENEALSLVLVGIRSELEALLHEGHARIRIVEAADVVRMNERPSHALRHKKNSSMAIALSLVRDGEAQGCVSAGNTGALMAFGRSIIRMYPGIERPAIAKLIPSLRGRCHVLDLGANVDSTAENLYQYALMGSLMASAICRQSEPRVALLNVGEEEIKGNEQVRLASHMLAQCDTINYIGYVEGSDLFRDVADVVVCDGFVGNIALKTGEGVAGLLIELLEQAFTRSMYGRFVGLLARPIIGRLLQLMDPSRHNGASLLGLQGVVIKSHGNANERAMLAAIRQAVREVQLEVPRRINERLDDLML.

This sequence belongs to the PlsX family. As to quaternary structure, homodimer. Probably interacts with PlsY.

It localises to the cytoplasm. The catalysed reaction is a fatty acyl-[ACP] + phosphate = an acyl phosphate + holo-[ACP]. The protein operates within lipid metabolism; phospholipid metabolism. Its function is as follows. Catalyzes the reversible formation of acyl-phosphate (acyl-PO(4)) from acyl-[acyl-carrier-protein] (acyl-ACP). This enzyme utilizes acyl-ACP as fatty acyl donor, but not acyl-CoA. This is Phosphate acyltransferase from Marinobacter nauticus (strain ATCC 700491 / DSM 11845 / VT8) (Marinobacter aquaeolei).